The following is a 101-amino-acid chain: Large ribosomal subunit protein eL30 (101 aa).

This sequence belongs to the eukaryotic ribosomal protein eL30 family.

The sequence is that of Large ribosomal subunit protein eL30 (rpl30e) from Thermococcus celer.